A 275-amino-acid chain; its full sequence is Elongation factor Ts (275 aa).

Residues 76–79 (TDFV) form an involved in Mg(2+) ion dislocation from EF-Tu region.

It belongs to the EF-Ts family.

It localises to the cytoplasm. Its function is as follows. Associates with the EF-Tu.GDP complex and induces the exchange of GDP to GTP. It remains bound to the aminoacyl-tRNA.EF-Tu.GTP complex up to the GTP hydrolysis stage on the ribosome. This chain is Elongation factor Ts, found in Corynebacterium glutamicum (strain R).